A 138-amino-acid chain; its full sequence is MGDKTKVQVSKLKPGRYIIIDDEPCRIVNITVSSPGKHGSAKARIEAVGIFDGKVRSIVKPTSAEVDVPIIDKRTAQVIAVTPDTVQIMDMETYEMFEVPLDTGVEEEIKDKIKEGINVEYWETLGRIKIMRIKGEEE.

K37 carries the hypusine modification.

The protein belongs to the eIF-5A family.

It localises to the cytoplasm. Functions by promoting the formation of the first peptide bond. In Pyrococcus furiosus (strain ATCC 43587 / DSM 3638 / JCM 8422 / Vc1), this protein is Translation initiation factor 5A.